The primary structure comprises 125 residues: Type-4 ice-structuring protein (125 aa).

Positions 1-20 are cleaved as a signal peptide; the sequence is MKYTLIAAIVVLALAQGTLA.

This sequence belongs to the apolipoprotein A1/A4/E family.

It localises to the secreted. In terms of biological role, antifreeze proteins lower the blood freezing point. The sequence is that of Type-4 ice-structuring protein from Gadus morhua (Atlantic cod).